The chain runs to 343 residues: Protein RecA (343 aa).

66–73 (GPESSGKT) lines the ATP pocket.

Belongs to the RecA family.

The protein resides in the cytoplasm. In terms of biological role, can catalyze the hydrolysis of ATP in the presence of single-stranded DNA, the ATP-dependent uptake of single-stranded DNA by duplex DNA, and the ATP-dependent hybridization of homologous single-stranded DNAs. It interacts with LexA causing its activation and leading to its autocatalytic cleavage. This Rickettsia canadensis (strain McKiel) protein is Protein RecA.